Here is a 256-residue protein sequence, read N- to C-terminus: Major prion protein (256 aa).

The signal sequence occupies residues 1 to 24; it reads MVKSHIGSWILVLFVAMWSDVGLC. Positions 25-233 are interaction with GRB2, ERI3 and SYN1; that stretch reads KKRPKPGGGW…ESQAYYQRGA (209 aa). The segment at 28–110 is disordered; sequence PKPGGGWNTG…QWNKPSKPKT (83 aa). 5 repeat units span residues 54–62, 63–70, 71–78, 79–86, and 87–95. A 5 X 8 AA tandem repeats of P-H-G-G-G-W-G-Q region spans residues 54–95; sequence PQGGGGWGQPHGGGWGQPHGGGWGQPHGGGWGQPHGGGGWGQ. Residues 55–97 are compositionally biased toward gly residues; that stretch reads QGGGGWGQPHGGGWGQPHGGGWGQPHGGGWGQPHGGGGWGQGG. Cu(2+)-binding residues include His-64, Gly-65, Gly-66, His-72, Gly-73, Gly-74, His-80, Gly-81, Gly-82, His-88, Gly-90, and Gly-91. Cys-182 and Cys-217 are disulfide-bonded. N-linked (GlcNAc...) asparagine glycans are attached at residues Asn-184 and Asn-200. A lipid anchor (GPI-anchor amidated alanine) is attached at Ala-233. Residues 234–256 constitute a propeptide, removed in mature form; that stretch reads SVILFSSPPVILLISFLIFLIVG.

Belongs to the prion family. As to quaternary structure, monomer and homodimer. Has a tendency to aggregate into amyloid fibrils containing a cross-beta spine, formed by a steric zipper of superposed beta-strands. Soluble oligomers may represent an intermediate stage on the path to fibril formation. Copper binding may promote oligomerization. Interacts with GRB2, APP, ERI3/PRNPIP and SYN1. Mislocalized cytosolically exposed PrP interacts with MGRN1; this interaction alters MGRN1 subcellular location and causes lysosomal enlargement. Interacts with KIAA1191.

The protein localises to the cell membrane. Its subcellular location is the golgi apparatus. Its function is as follows. Its primary physiological function is unclear. Has cytoprotective activity against internal or environmental stresses. May play a role in neuronal development and synaptic plasticity. May be required for neuronal myelin sheath maintenance. May play a role in iron uptake and iron homeostasis. Soluble oligomers are toxic to cultured neuroblastoma cells and induce apoptosis (in vitro). Association with GPC1 (via its heparan sulfate chains) targets PRNP to lipid rafts. Also provides Cu(2+) or Zn(2+) for the ascorbate-mediated GPC1 deaminase degradation of its heparan sulfate side chains. In Odocoileus hemionus (Mule deer), this protein is Major prion protein (PRNP).